The sequence spans 238 residues: ATP-dependent dethiobiotin synthetase BioD (238 aa).

Position 13-18 (D13–F18) interacts with ATP. T17 contributes to the Mg(2+) binding site. Residue K38 is part of the active site. Position 42 (S42) interacts with substrate. ATP-binding positions include D55, E116 to G119, P209 to I211, and N216. D55 and E116 together coordinate Mg(2+).

It belongs to the dethiobiotin synthetase family. Homodimer. Mg(2+) serves as cofactor.

Its subcellular location is the cytoplasm. It carries out the reaction (7R,8S)-7,8-diammoniononanoate + CO2 + ATP = (4R,5S)-dethiobiotin + ADP + phosphate + 3 H(+). It functions in the pathway cofactor biosynthesis; biotin biosynthesis; biotin from 7,8-diaminononanoate: step 1/2. Catalyzes a mechanistically unusual reaction, the ATP-dependent insertion of CO2 between the N7 and N8 nitrogen atoms of 7,8-diaminopelargonic acid (DAPA, also called 7,8-diammoniononanoate) to form a ureido ring. The protein is ATP-dependent dethiobiotin synthetase BioD of Clostridium novyi (strain NT).